The sequence spans 163 residues: UPF0134 protein MPN_139 (163 aa).

This sequence belongs to the UPF0134 family.

The polypeptide is UPF0134 protein MPN_139 (Mycoplasma pneumoniae (strain ATCC 29342 / M129 / Subtype 1) (Mycoplasmoides pneumoniae)).